Reading from the N-terminus, the 212-residue chain is TATA-box-binding protein 2 (212 aa).

2 repeat units span residues 30-114 (THPE…KKIG) and 120-201 (SNFN…YPIL).

It belongs to the TBP family. In terms of assembly, belongs to the TFIID complex together with the TBP-associated factors (TAFs). Binds DNA as monomer.

It localises to the nucleus. In terms of biological role, general transcription factor that functions at the core of the DNA-binding multiprotein factor TFIID. Binding of TFIID to the TATA box is the initial transcriptional step of the pre-initiation complex (PIC), playing a role in the activation of eukaryotic genes transcribed by RNA polymerase II. The protein is TATA-box-binding protein 2 of Entamoeba histolytica (strain ATCC 30459 / HM-1:IMSS / ABRM).